The chain runs to 268 residues: Imidazole glycerol phosphate synthase subunit HisF (268 aa).

Catalysis depends on residues Asp-12 and Asp-131.

It belongs to the HisA/HisF family. In terms of assembly, heterodimer of HisH and HisF.

Its subcellular location is the cytoplasm. The catalysed reaction is 5-[(5-phospho-1-deoxy-D-ribulos-1-ylimino)methylamino]-1-(5-phospho-beta-D-ribosyl)imidazole-4-carboxamide + L-glutamine = D-erythro-1-(imidazol-4-yl)glycerol 3-phosphate + 5-amino-1-(5-phospho-beta-D-ribosyl)imidazole-4-carboxamide + L-glutamate + H(+). Its pathway is amino-acid biosynthesis; L-histidine biosynthesis; L-histidine from 5-phospho-alpha-D-ribose 1-diphosphate: step 5/9. In terms of biological role, IGPS catalyzes the conversion of PRFAR and glutamine to IGP, AICAR and glutamate. The HisF subunit catalyzes the cyclization activity that produces IGP and AICAR from PRFAR using the ammonia provided by the HisH subunit. This chain is Imidazole glycerol phosphate synthase subunit HisF, found in Methanocorpusculum labreanum (strain ATCC 43576 / DSM 4855 / Z).